Consider the following 65-residue polypeptide: Crotamine CRO1 (65 aa).

Residues M1–A22 form the signal peptide. 3 disulfide bridges follow: C26–C58, C33–C52, and C40–C59.

Belongs to the crotamine-myotoxin family. In terms of assembly, monomer. In terms of tissue distribution, expressed by the venom gland.

It is found in the secreted. Its function is as follows. Cationic peptide that possesses multiple functions. It acts as a cell-penetrating peptide (CPP), and as a potent voltage-gated potassium channel (Kv) inhibitor. It exhibits antimicrobial activities, hind limb paralysis, and severe muscle necrosis by a non-enzymatic mechanism. The polypeptide is Crotamine CRO1 (CRO1) (Crotalus durissus terrificus (South American rattlesnake)).